A 466-amino-acid chain; its full sequence is MSIASVASVFKGEHAVGSTVTVRGWVRTRRDSKAGISFLAVYDGSCFNPIQGVVPNSLENYDNEVLKLTAGCSVIVTGDIVESPGAGQAYELQVTAVEVTGWVEDPDTYPMAAKRHSIEHLRELAHLRPRTNIIGAVARVRNCLSQAIHRFYHENGFVWVSTPLITASDCEGAGEMFRVSTLDMENLPRTSDGKVDYDKDFFGKEAFLTVSGQLNGETYACALSKIYTFGPTFRAENSNTSRHLAEFWMVEPEVAFATLNDIAGLAEGMLKYAFNAVLTERMDDLQFFAQHVDKTVIERLQSFVSSDFAQVDYTDAVEILQKSGREFEFPVSWGIDLSSEHERYLAEEHFKAPVVVKNYPKDIKAFYMRLNEDGKTVAAMDVLAPGIGEIIGGSQREERLDVLDMRLEEMDLNKEDYWWYRDLRRYGTVPHAGFGLGFERLVSYVTGVSNIRDVIPFPRAPRTANF.

The protein belongs to the class-II aminoacyl-tRNA synthetase family. In terms of assembly, homodimer.

Its subcellular location is the cytoplasm. The enzyme catalyses tRNA(Asn) + L-asparagine + ATP = L-asparaginyl-tRNA(Asn) + AMP + diphosphate + H(+). The polypeptide is Asparagine--tRNA ligase (Shewanella oneidensis (strain ATCC 700550 / JCM 31522 / CIP 106686 / LMG 19005 / NCIMB 14063 / MR-1)).